The primary structure comprises 332 residues: Gibberellin 2-beta-dioxygenase (332 aa).

Residues 175 to 280 (KSDSCFRLNH…RLSMIYFGGP (106 aa)) form the Fe2OG dioxygenase domain. Fe cation contacts are provided by histidine 204, aspartate 206, and histidine 261. The active site involves arginine 271.

Belongs to the iron/ascorbate-dependent oxidoreductase family. GA2OX subfamily. Fe cation is required as a cofactor.

The enzyme catalyses gibberellin A1 + 2-oxoglutarate + O2 = gibberellin A8 + succinate + CO2. Its pathway is plant hormone biosynthesis; gibberellin biosynthesis. Its function is as follows. Catalyzes the 2-beta-hydroxylation of several biologically active gibberellins, leading to the homeostatic regulation of their endogenous level. Catabolism of gibberellins (GAs) plays a central role in plant development. Converts GA9/GA20 to GA51/GA29 and GA4/GA1 to GA34/GA8. This Phaseolus coccineus (Scarlet runner bean) protein is Gibberellin 2-beta-dioxygenase (GA2OX1).